The following is a 284-amino-acid chain: UPF0276 protein PA14_21580 (284 aa).

The protein belongs to the UPF0276 family.

This is UPF0276 protein PA14_21580 from Pseudomonas aeruginosa (strain UCBPP-PA14).